The following is a 509-amino-acid chain: Maturase K (509 aa).

This sequence belongs to the intron maturase 2 family. MatK subfamily.

The protein resides in the plastid. Its subcellular location is the chloroplast. Usually encoded in the trnK tRNA gene intron. Probably assists in splicing its own and other chloroplast group II introns. The chain is Maturase K from Clematis florida (Asian virgin's bower).